Reading from the N-terminus, the 502-residue chain is Glycerol kinase (502 aa).

Position 14 (T14) interacts with ADP. The ATP site is built by T14, T15, and S16. T14 is a sn-glycerol 3-phosphate binding site. R18 contributes to the ADP binding site. Sn-glycerol 3-phosphate-binding residues include R84, E85, Y136, and D246. Positions 84, 85, 136, 246, and 247 each coordinate glycerol. ADP contacts are provided by T268 and G311. Positions 268, 311, 315, and 412 each coordinate ATP. G412 and N416 together coordinate ADP.

This sequence belongs to the FGGY kinase family. Homotetramer and homodimer (in equilibrium). Heterodimer with EIIA-Glc. Binds 1 zinc ion per glycerol kinase EIIA-Glc dimer. The zinc ion is important for dimerization.

The catalysed reaction is glycerol + ATP = sn-glycerol 3-phosphate + ADP + H(+). It participates in polyol metabolism; glycerol degradation via glycerol kinase pathway; sn-glycerol 3-phosphate from glycerol: step 1/1. Its activity is regulated as follows. Activity of this regulatory enzyme is affected by several metabolites. Allosterically and non-competitively inhibited by fructose 1,6-bisphosphate (FBP) and unphosphorylated phosphocarrier protein EIIA-Glc (III-Glc), an integral component of the bacterial phosphotransferase (PTS) system. Key enzyme in the regulation of glycerol uptake and metabolism. Catalyzes the phosphorylation of glycerol to yield sn-glycerol 3-phosphate. The polypeptide is Glycerol kinase (Shigella flexneri).